We begin with the raw amino-acid sequence, 376 residues long: Alcohol dehydrogenase 6 (376 aa).

Zn(2+) is bound by residues cysteine 47, histidine 69, cysteine 99, cysteine 102, cysteine 105, cysteine 113, and cysteine 175. NAD(+) contacts are provided by residues 200–205 (GLGGVG), aspartate 224, arginine 229, 293–295 (VGA), and arginine 371.

It belongs to the zinc-containing alcohol dehydrogenase family. Class-V subfamily. As to quaternary structure, dimer. Zn(2+) serves as cofactor.

The protein resides in the cytoplasm. The catalysed reaction is a primary alcohol + NAD(+) = an aldehyde + NADH + H(+). It catalyses the reaction a secondary alcohol + NAD(+) = a ketone + NADH + H(+). Its function is as follows. Alcohol dehydrogenase. Catalyzes the NAD-dependent oxidation of primary alcohols to the corresponding aldehydes. Oxidizes secondary alcohols to the corresponding ketones. This is Alcohol dehydrogenase 6 (Adh6) from Rattus norvegicus (Rat).